A 233-amino-acid polypeptide reads, in one-letter code: MPTSKKLKDALAKVDRSKSYTLNDGLELVRSSAYAKFTETVDVAVRLGVDPRHADQMVRGAVVLPNGLGKEVRVLVFAKGEKEKEARDAGADFVGADDLVAKIQEGWFEFDTAIATPDMMGVVGKIGKLLGPRGLMPNPKVGTVTFDVGRAVNESKSGKVEFRVEKAGIIHAPVGKVSFETDKLKENILALIDALVKSKPSAAKGTYIKKISVSSTMGPGVNLDVSDVSSQVI.

It belongs to the universal ribosomal protein uL1 family. As to quaternary structure, part of the 50S ribosomal subunit.

Functionally, binds directly to 23S rRNA. The L1 stalk is quite mobile in the ribosome, and is involved in E site tRNA release. In terms of biological role, protein L1 is also a translational repressor protein, it controls the translation of the L11 operon by binding to its mRNA. This chain is Large ribosomal subunit protein uL1, found in Geotalea daltonii (strain DSM 22248 / JCM 15807 / FRC-32) (Geobacter daltonii).